Reading from the N-terminus, the 264-residue chain is Acyl-[acyl-carrier-protein]--UDP-N-acetylglucosamine O-acyltransferase (264 aa).

The protein belongs to the transferase hexapeptide repeat family. LpxA subfamily. As to quaternary structure, homotrimer.

It is found in the cytoplasm. It carries out the reaction a (3R)-hydroxyacyl-[ACP] + UDP-N-acetyl-alpha-D-glucosamine = a UDP-3-O-[(3R)-3-hydroxyacyl]-N-acetyl-alpha-D-glucosamine + holo-[ACP]. It functions in the pathway glycolipid biosynthesis; lipid IV(A) biosynthesis; lipid IV(A) from (3R)-3-hydroxytetradecanoyl-[acyl-carrier-protein] and UDP-N-acetyl-alpha-D-glucosamine: step 1/6. Functionally, involved in the biosynthesis of lipid A, a phosphorylated glycolipid that anchors the lipopolysaccharide to the outer membrane of the cell. The sequence is that of Acyl-[acyl-carrier-protein]--UDP-N-acetylglucosamine O-acyltransferase from Rickettsia canadensis (strain McKiel).